A 419-amino-acid polypeptide reads, in one-letter code: GTPase Obg (419 aa).

The region spanning 1 to 158 is the Obg domain; that stretch reads MFVDQARIFV…KWIRLELKLL (158 aa). The OBG-type G domain occupies 159–327; it reads ADVGLVGFPN…LMGKTYALLQ (169 aa). GTP contacts are provided by residues 165-172, 190-194, 212-215, 282-285, and 308-310; these read GFPNAGKS, FTTLV, DIPG, NKMD, and SAV. S172 and T192 together coordinate Mg(2+). The region spanning 342-419 is the OCT domain; the sequence is RRFEEELPFK…IKDFEFEFTE (78 aa).

The protein belongs to the TRAFAC class OBG-HflX-like GTPase superfamily. OBG GTPase family. In terms of assembly, monomer. It depends on Mg(2+) as a cofactor.

The protein localises to the cytoplasm. An essential GTPase which binds GTP, GDP and possibly (p)ppGpp with moderate affinity, with high nucleotide exchange rates and a fairly low GTP hydrolysis rate. Plays a role in control of the cell cycle, stress response, ribosome biogenesis and in those bacteria that undergo differentiation, in morphogenesis control. This Syntrophomonas wolfei subsp. wolfei (strain DSM 2245B / Goettingen) protein is GTPase Obg.